Reading from the N-terminus, the 1087-residue chain is 2'-5'-oligoadenylate synthase 3 (1087 aa).

The residue at position 1 (methionine 1) is an N-acetylmethionine. An OAS domain 1 region spans residues 6–343 (TPAAALDRFV…GDPVQSWKGP (338 aa)). Interaction with dsRNA stretches follow at residues 12 to 57 (DRFV…VLKT) and 186 to 200 (ELRR…AKLK). Residues 344 to 410 (GLPRAGCSGL…VPGMALDLSQ (67 aa)) are linker. At threonine 365 the chain carries Phosphothreonine. 2 OAS domain regions span residues 411–742 (IPTK…PWDV) and 750–1084 (TPAG…WPVK). Position 804 (serine 804) interacts with ATP. Residues aspartate 816, aspartate 818, and aspartate 888 each coordinate Mg(2+). The ATP site is built by arginine 947, lysine 950, and glutamine 969.

It belongs to the 2-5A synthase family. Monomer. It depends on Mg(2+) as a cofactor. As to expression, present at high level in placenta trophoblast.

Its subcellular location is the cytoplasm. The protein resides in the nucleus. The enzyme catalyses 3 ATP = 5'-triphosphoadenylyl-(2'-&gt;5')-adenylyl-(2'-&gt;5')-adenosine + 2 diphosphate. With respect to regulation, produced as a latent enzyme which is activated by dsRNA generated during the course of viral infection. Strongly activated by long dsRNAs at least 50 nucleotides in length. ssRNA does not activate the enzyme. Its function is as follows. Interferon-induced, dsRNA-activated antiviral enzyme which plays a critical role in cellular innate antiviral response. In addition, it may also play a role in other cellular processes such as apoptosis, cell growth, differentiation and gene regulation. Synthesizes preferentially dimers of 2'-5'-oligoadenylates (2-5A) from ATP which then bind to the inactive monomeric form of ribonuclease L (RNase L) leading to its dimerization and subsequent activation. Activation of RNase L leads to degradation of cellular as well as viral RNA, resulting in the inhibition of protein synthesis, thus terminating viral replication. Can mediate the antiviral effect via the classical RNase L-dependent pathway or an alternative antiviral pathway independent of RNase L. Displays antiviral activity against Chikungunya virus (CHIKV), Dengue virus, Sindbis virus (SINV) and Semliki forest virus (SFV). The protein is 2'-5'-oligoadenylate synthase 3 (OAS3) of Homo sapiens (Human).